The primary structure comprises 347 residues: Cannabinoid receptor 2 (347 aa).

Residues 1–33 (MEGCRETEVTNGSNGGLEFNPMKEYMILSSGQQ) are Extracellular-facing. Asparagine 11 carries an N-linked (GlcNAc...) asparagine glycan. A helical transmembrane segment spans residues 34–59 (IAVAVLCTLMGLLSALENMAVLYIIL). Topologically, residues 60–71 (SSRRLRRKPSYL) are cytoplasmic. The helical transmembrane segment at 72-92 (FISSLAGADFLASVIFACNFV) threads the bilayer. Residues 93–104 (IFHVFHGVDSNA) lie on the Extracellular side of the membrane. Residues 105 to 129 (IFLLKIGSVTMTFTASVGSLLLTAV) traverse the membrane as a helical segment. Residues 130–149 (DRYLCLCYPPTYKALVTRGR) lie on the Cytoplasmic side of the membrane. Residues 150–172 (ALVALCVMWVLSALISYLPLMGW) traverse the membrane as a helical segment. Residues 173–188 (TCCPSPCSELFPLIPN) are Extracellular-facing. A helical membrane pass occupies residues 189–214 (DYLLGWLLFIAILFSGIIYTYGYVLW). Topologically, residues 215–246 (KAHRHVATLAEHQDRQVPGIARMRLDVRLAKT) are cytoplasmic. The chain crosses the membrane as a helical span at residues 247–267 (LGLVLAVLLICWFPALALMGH). Residues 268 to 279 (SLVTTLSDQVKE) lie on the Extracellular side of the membrane. The chain crosses the membrane as a helical span at residues 280-301 (AFAFCSMLCLVNSMVNPIIYAL). Residues 302–347 (RSGEIRSAAQHCLIGWKKYLQGLGPEGKEEGPRSSVTETEADVKTT) lie on the Cytoplasmic side of the membrane. Residues 326-347 (PEGKEEGPRSSVTETEADVKTT) form a disordered region. 2 positions are modified to phosphoserine: serine 335 and serine 336. At threonine 338 the chain carries Phosphothreonine.

This sequence belongs to the G-protein coupled receptor 1 family. In terms of tissue distribution, expressed by cells of hematopoietic origin. Expressed in skin in suprabasal layers and hair follicles, in brain by neurons and glial cells and by osteoblasts, osteocytes, osteoclasts (at protein level).

The protein resides in the cell membrane. It localises to the cell projection. It is found in the dendrite. Its subcellular location is the perikaryon. Heterotrimeric G protein-coupled receptor for endocannabinoid 2-arachidonoylglycerol mediating inhibition of adenylate cyclase. May function in inflammatory response, nociceptive transmission and bone homeostasis. The protein is Cannabinoid receptor 2 (Cnr2) of Mus musculus (Mouse).